Here is a 159-residue protein sequence, read N- to C-terminus: MKTAIYPGSFDPVTYGHIDIIERGANLFDKLIVAVLLNPSKKPLFSVEERVELLKAVTYDISNVEIDYFDGLLVDYAKKVKANAIIKGLRMVSDFEYEFQMALINKKLNPSLETIFLMTNAKYGYLSSSVVKEIAQFGGCLSEFVPDIVAQKLMEKFSR.

Residue Ser9 participates in substrate binding. Residues Ser9–Phe10 and His17 contribute to the ATP site. Lys41, Leu73, and Lys87 together coordinate substrate. Residues Gly88 to Arg90, Glu98, and Tyr123 to Ser129 contribute to the ATP site.

It belongs to the bacterial CoaD family. Homohexamer. Mg(2+) serves as cofactor.

Its subcellular location is the cytoplasm. The catalysed reaction is (R)-4'-phosphopantetheine + ATP + H(+) = 3'-dephospho-CoA + diphosphate. Its pathway is cofactor biosynthesis; coenzyme A biosynthesis; CoA from (R)-pantothenate: step 4/5. Functionally, reversibly transfers an adenylyl group from ATP to 4'-phosphopantetheine, yielding dephospho-CoA (dPCoA) and pyrophosphate. The sequence is that of Phosphopantetheine adenylyltransferase from Thermoanaerobacter pseudethanolicus (strain ATCC 33223 / 39E) (Clostridium thermohydrosulfuricum).